Consider the following 78-residue polypeptide: Calcium/calmodulin-dependent protein kinase II inhibitor 1 (78 aa).

A CAMK2 inhibitory domain region spans residues 41 to 68 (NKRPPKLGQIGRSKRVVIEDDRIDDVLK).

This sequence belongs to the CAMK2N family. In terms of assembly, interacts with CAMK2B; the presence of Ca(2+)/calmodulin increases the interaction but is not essential. Interacts with CAMK2A; this interaction requires CAMK2A activation by Ca(2+).

The protein resides in the synapse. The protein localises to the cell projection. Its subcellular location is the dendrite. It localises to the postsynaptic density. In terms of biological role, potent and specific inhibitor of CaM-kinase II (CAMK2). Plays a role in the maintenance of long-term retrieval-induced memory in response to contextual fear. Modulates blood pressure and vascular reactivity via regulation of CAMK2 activity in addition to regulation of left ventricular mass. Mediates the NLRP3 inflammasome in cardiomyocytes via acting as an inhibitor of the MAPK14/p38 and MAPK8/JNK pathways, thereby regulating ventricular remodeling and cardiac rhythm post-myocardial infarction. Negatively effects insulin sensitivity and promotes lipid formation in adipose tissues independent of CAMK2 signaling. The sequence is that of Calcium/calmodulin-dependent protein kinase II inhibitor 1 (CAMK2N1) from Bos taurus (Bovine).